The following is a 325-amino-acid chain: BES1/BZR1 homolog protein 4 (325 aa).

The segment at 1-21 (MTSGTRMPTWRERENNKRRER) is disordered. Residues 6 to 89 (RMPTWREREN…RMEIGGGSAT (84 aa)) form a required for DNA-binding region. At T169 the chain carries Phosphothreonine. Residues 304–325 (ERIHEESGSDDLELTLGNSSTR) form a disordered region.

It belongs to the BZR/LAT61 family. In terms of processing, phosphorylated. Phosphorylation increases protein degradation.

This is BES1/BZR1 homolog protein 4 (BEH4) from Arabidopsis thaliana (Mouse-ear cress).